The following is an 85-amino-acid chain: Defensin-like protein 76 (85 aa).

Positions 1 to 27 (MQNQKHSHILTAITIVLLFAMAAKINA) are cleaved as a signal peptide. Cystine bridges form between C35–C70, C40–C59, C44–C68, and C48–C69.

The protein belongs to the DEFL family.

The protein resides in the secreted. The chain is Defensin-like protein 76 (LCR86) from Arabidopsis thaliana (Mouse-ear cress).